The sequence spans 299 residues: Methionyl-tRNA formyltransferase (299 aa).

(6S)-5,6,7,8-tetrahydrofolate is bound at residue 109–112 (SLLP).

The protein belongs to the Fmt family.

The catalysed reaction is L-methionyl-tRNA(fMet) + (6R)-10-formyltetrahydrofolate = N-formyl-L-methionyl-tRNA(fMet) + (6S)-5,6,7,8-tetrahydrofolate + H(+). Functionally, attaches a formyl group to the free amino group of methionyl-tRNA(fMet). The formyl group appears to play a dual role in the initiator identity of N-formylmethionyl-tRNA by promoting its recognition by IF2 and preventing the misappropriation of this tRNA by the elongation apparatus. In Wolbachia sp. subsp. Drosophila simulans (strain wRi), this protein is Methionyl-tRNA formyltransferase.